Consider the following 31-residue polypeptide: Cytochrome b6-f complex subunit 6 (31 aa).

A helical membrane pass occupies residues 4–24 (ITSFFGFLLAALTITSVLFIG).

It belongs to the PetL family. As to quaternary structure, the 4 large subunits of the cytochrome b6-f complex are cytochrome b6, subunit IV (17 kDa polypeptide, PetD), cytochrome f and the Rieske protein, while the 4 small subunits are PetG, PetL, PetM and PetN. The complex functions as a dimer.

Its subcellular location is the plastid. The protein resides in the chloroplast thylakoid membrane. In terms of biological role, component of the cytochrome b6-f complex, which mediates electron transfer between photosystem II (PSII) and photosystem I (PSI), cyclic electron flow around PSI, and state transitions. PetL is important for photoautotrophic growth as well as for electron transfer efficiency and stability of the cytochrome b6-f complex. This is Cytochrome b6-f complex subunit 6 from Oenothera elata subsp. hookeri (Hooker's evening primrose).